We begin with the raw amino-acid sequence, 454 residues long: Rhizobactin siderophore biosynthesis protein RhbE (454 aa).

7 to 13 (AGIGIGP) contributes to the FAD binding site.

This sequence belongs to the lysine N(6)-hydroxylase/L-ornithine N(5)-oxygenase family. Requires FAD as cofactor.

The protein operates within siderophore biosynthesis; rhizobactin biosynthesis. This Rhizobium meliloti (strain 1021) (Ensifer meliloti) protein is Rhizobactin siderophore biosynthesis protein RhbE (rhbE).